The primary structure comprises 208 residues: Transmembrane emp24 domain-containing protein p24beta2 (208 aa).

Positions 1-21 (MSLKGTIVLLGLLWSFQATLG) are cleaved as a signal peptide. At 22 to 176 (IRFVIDREEC…ENMSKRAVHK (155 aa)) the chain is on the lumenal side. The GOLD domain occupies 29–116 (EECFSHKAEY…HETIDFDVQL (88 aa)). The stretch at 134-149 (LMEQISKLEEALYNIQ) forms a coiled coil. Residue asparagine 168 is glycosylated (N-linked (GlcNAc...) asparagine). A helical membrane pass occupies residues 177 to 195 (ALFESFALIGASFLQVYLL). The Cytoplasmic portion of the chain corresponds to 196–208 (RRLFERKLGMSRV). Residues 198–199 (LF) carry the COPII vesicle coat-binding motif. The COPI vesicle coat-binding signature appears at 198–208 (LFERKLGMSRV). The Required for the export from the endoplasmic reticulum to the Golgi motif lies at 207–208 (RV).

It belongs to the EMP24/GP25L family. Probably oligomerizes with other members of the EMP24/GP25L family. Associates with the COPI vesicle coat (coatomer). Associates with the COPII vesicle coat (coatomer). Interacts with p24delta5.

The protein localises to the golgi apparatus. It localises to the cis-Golgi network membrane. The protein resides in the golgi stack membrane. Functionally, involved in vesicular protein trafficking. Mainly functions in the early secretory pathway but also in post-Golgi membranes. Thought to act as cargo receptor at the lumenal side for incorporation of secretory cargo molecules into transport vesicles and to be involved in vesicle coat formation at the cytoplasmic side. Interacts with p24delta5 at endoplasmic reticulum export sites for endoplasmic reticulum exit and coupled transport to the Golgi apparatus. In Arabidopsis thaliana (Mouse-ear cress), this protein is Transmembrane emp24 domain-containing protein p24beta2.